A 316-amino-acid polypeptide reads, in one-letter code: MKISEVLEFKVEGEEERLDKFLARAYPDFSRSYIKKLVKEGLVYVNGEEVRKPSRKLREGERVILHVPEPEPLDVKPENIPINIIYEDEDIAVVEKPCGLVVHPSPGYTSGTLVNALLYHIKDLSSIGGVERPGIVHRLDKETAGVMVIAKNNTAHRNLVRQFQERKTEKFYKVLVKGLVKKDYGAIDTPIARHPVDRKRFWVRKEGKEALTEYWVLKRYEKYEITLLKVKIHTGRTHQIRVHFASIGHPVLGDRTYGFKSSSVPKELLSLMGECNMLIAYHLGFYHPTKGEWMVFEIEEPETFKSVYSWLEEHSP.

The 74-residue stretch at 16–89 folds into the S4 RNA-binding domain; the sequence is ERLDKFLARA…IPINIIYEDE (74 aa). The active site involves aspartate 140.

Belongs to the pseudouridine synthase RluA family.

The catalysed reaction is a uridine in RNA = a pseudouridine in RNA. This is an uncharacterized protein from Aquifex aeolicus (strain VF5).